The following is a 451-amino-acid chain: Tubulin alpha chain (451 aa).

Gln11 contacts GTP. Position 40 is an N6-acetyllysine (Lys40). GTP-binding residues include Glu71, Ser140, Gly144, Thr145, Thr179, Asn206, and Asn228. Glu71 contacts Mg(2+). Glu254 is an active-site residue.

It belongs to the tubulin family. In terms of assembly, dimer of alpha and beta chains. A typical microtubule is a hollow water-filled tube with an outer diameter of 25 nm and an inner diameter of 15 nM. Alpha-beta heterodimers associate head-to-tail to form protofilaments running lengthwise along the microtubule wall with the beta-tubulin subunit facing the microtubule plus end conferring a structural polarity. Microtubules usually have 13 protofilaments but different protofilament numbers can be found in some organisms and specialized cells. Requires Mg(2+) as cofactor. Undergoes a tyrosination/detyrosination cycle, the cyclic removal and re-addition of a C-terminal tyrosine residue by the enzymes tubulin tyrosine carboxypeptidase (TTCP) and tubulin tyrosine ligase (TTL), respectively. Post-translationally, acetylation of alpha chains at Lys-40 stabilizes microtubules and affects affinity and processivity of microtubule motors. This modification has a role in multiple cellular functions, ranging from cell motility, cell cycle progression or cell differentiation to intracellular trafficking and signaling. In terms of tissue distribution, actively expressed in the lens but does not seem to be lens-specific.

It is found in the cytoplasm. Its subcellular location is the cytoskeleton. The enzyme catalyses GTP + H2O = GDP + phosphate + H(+). Its function is as follows. Tubulin is the major constituent of microtubules, a cylinder consisting of laterally associated linear protofilaments composed of alpha- and beta-tubulin heterodimers. Microtubules grow by the addition of GTP-tubulin dimers to the microtubule end, where a stabilizing cap forms. Below the cap, tubulin dimers are in GDP-bound state, owing to GTPase activity of alpha-tubulin. This is Tubulin alpha chain from Enteroctopus dofleini (North Pacific giant octopus).